The following is a 66-amino-acid chain: MKLSALSIIFGMILVMTIMYTKAEAEAEAEADADADAKAEAEAFWGTLAKWALKAIPAAMGMKQNK.

An N-terminal signal peptide occupies residues 1–23 (MKLSALSIIFGMILVMTIMYTKA). A propeptide spanning residues 24–43 (EAEAEAEADADADAKAEAEA) is cleaved from the precursor.

This sequence belongs to the non-disulfide-bridged peptide (NDBP) superfamily. Medium-length antimicrobial peptide (group 3) family. Ponericin-W subfamily. As to expression, expressed by the venom gland.

The protein localises to the secreted. The protein resides in the target cell membrane. Functionally, may have antimicrobial properties by disrupting the integrity of the bacterial cell membrane. In addition, when tested in vitro on the parasite Trypanosoma cruzi (responsible of the Chagas disease), is able to potently reduce the number of the three forms (epimastigote, trypomastigote and amastigote) by inducing cell death through necrosis. In terms of biological role, may have antimicrobial properties by disrupting the integrity of the bacterial cell membrane. In addition, when tested in vitro on the parasite Trypanosoma cruzi (responsible of the Chagas disease), is able to moderately reduce the number of the forms epimastigote and trypomastigote. Its activity on the amastigote form has not been tested. May have antimicrobial properties by disrupting the integrity of the bacterial cell membrane. In addition, when tested in vitro on the parasite Trypanosoma cruzi (responsible of the Chagas disease), shows only a weak reduction of the number of the trypomastigote forms. Has no activity on the epimastigote forms. Its activity on the amastigote form has not been tested. In Dinoponera quadriceps (South American ant), this protein is M-poneratoxin-Dq3a.